The primary structure comprises 1589 residues: Sterile alpha motif domain-containing protein 9 (1589 aa).

The SAM domain occupies W14–A78. Positions I83–S135 are disordered. Residues Q103–P120 are compositionally biased toward basic and acidic residues.

As to quaternary structure, interacts with RGL2. Interacts with EEA1. In terms of assembly, (Microbial infection) Interacts with myxoma virus protein M062. Widely expressed. Very low levels are detected in skeletal muscle. Not detected in brain. Down-regulated in aggressive fibromatosis, as well as in breast and colon cancers. Up-regulated in fibroblasts from patients with normophosphatemic tumoral calcinosis (NFTC).

The protein localises to the cytoplasm. In terms of biological role, double-stranded nucleic acid binding that acts as an antiviral factor by playing an essential role in the formation of cytoplasmic antiviral granules. May play a role in the inflammatory response to tissue injury and the control of extra-osseous calcification, acting as a downstream target of TNF-alpha signaling. Involved in the regulation of EGR1, in coordination with RGL2. May be involved in endosome fusion. The chain is Sterile alpha motif domain-containing protein 9 (SAMD9) from Homo sapiens (Human).